Here is a 763-residue protein sequence, read N- to C-terminus: Phosphoglycerol transferase I (763 aa).

4 consecutive transmembrane segments (helical) span residues 1–21 (MSEL…AWKA), 26–46 (WWFA…ITLF), 77–97 (ILPG…LGWI), and 108–128 (FGYS…SPAF).

The protein belongs to the OpgB family.

The protein localises to the cell inner membrane. It catalyses the reaction a phosphatidylglycerol + a membrane-derived-oligosaccharide D-glucose = a 1,2-diacyl-sn-glycerol + a membrane-derived-oligosaccharide 6-(glycerophospho)-D-glucose.. It participates in glycan metabolism; osmoregulated periplasmic glucan (OPG) biosynthesis. In terms of biological role, transfers a phosphoglycerol residue from phosphatidylglycerol to the membrane-bound nascent glucan backbones. The sequence is that of Phosphoglycerol transferase I from Escherichia coli O7:K1 (strain IAI39 / ExPEC).